Consider the following 374-residue polypeptide: MNFNKLKFGDTIGIIGGGQLGKMMAQSAQKMGFKVICLDPNPDSPCKSVAHEFITAAYDDEEALHELGEKSDVITYEFENISAEQLIRLTQKFNIPQGYQAIQLLQDRLTEKQTLQKAGSKIVPFLPIKEEKDLNVVINQLGYPFIVKTRFGGYDGKGQVLVKNEESIQEAKDLISQQECVAEQFLDIALEVSLTVTIGNQKQITYFPLQENEHRNQILFKTIVPARSDKEQEARDEVNKIINEVHFVGTFTVEFFIDKSNNLYVNEIAPRPHNSGHYSIEACDYSQFDTHILAVTGQNLPKEIEILKPAVMMNLLGRDLDLLEDKFANHPEWHVHIYGKPERKPNRKMGHMTILTNNVDETEKAMLKQFEGRE.

ATP is bound by residues Arg-108, Lys-148, Gly-153–Gln-159, Glu-183–Leu-186, Glu-191, His-214, and Asn-266–Glu-267. The ATP-grasp domain maps to Lys-112–Thr-296.

It belongs to the PurK/PurT family. In terms of assembly, homodimer.

It catalyses the reaction 5-amino-1-(5-phospho-beta-D-ribosyl)imidazole + hydrogencarbonate + ATP = 5-carboxyamino-1-(5-phospho-D-ribosyl)imidazole + ADP + phosphate + 2 H(+). Its pathway is purine metabolism; IMP biosynthesis via de novo pathway; 5-amino-1-(5-phospho-D-ribosyl)imidazole-4-carboxylate from 5-amino-1-(5-phospho-D-ribosyl)imidazole (N5-CAIR route): step 1/2. Its function is as follows. Catalyzes the ATP-dependent conversion of 5-aminoimidazole ribonucleotide (AIR) and HCO(3)(-) to N5-carboxyaminoimidazole ribonucleotide (N5-CAIR). This chain is N5-carboxyaminoimidazole ribonucleotide synthase, found in Staphylococcus haemolyticus (strain JCSC1435).